Reading from the N-terminus, the 444-residue chain is Nuclear distribution protein nudF (444 aa).

One can recognise a LisH domain in the interval glutamine 9–glutamate 41. Residues threonine 60 to serine 88 adopt a coiled-coil conformation. Residues leucine 83–threonine 107 are disordered. 7 WD repeats span residues serine 112–lysine 153, histidine 155–arginine 195, glycine 199–valine 239, alanine 243–alanine 282, glycine 285–leucine 345, glycine 347–lysine 386, and alanine 391–aspartate 437.

It belongs to the WD repeat LIS1/nudF family. As to quaternary structure, interacts with dynein. Self-associates. Interacts with bnfA, nudC and nudE.

It localises to the cytoplasm. The protein resides in the cytoskeleton. Its subcellular location is the spindle pole. In terms of biological role, positively regulates the activity of the minus-end directed microtubule motor protein dynein. May enhance dynein-mediated microtubule sliding by targeting dynein to the microtubule plus end. Required for nuclear migration during vegetative growth as well as development. Required for retrograde early endosome (EE) transport from the hyphal tip. Required for localization of dynein to the mitotic spindle poles. Recruits additional proteins to the dynein complex at SPBs. This is Nuclear distribution protein nudF from Emericella nidulans (strain FGSC A4 / ATCC 38163 / CBS 112.46 / NRRL 194 / M139) (Aspergillus nidulans).